A 267-amino-acid polypeptide reads, in one-letter code: MIALSNALSRVFGSVAGYEFPSFIQKGINALYVKIFKIDLSEFEPLENYKSLNALFTRSLKKERPFDKTPNACIAPCDALITECAFLDNDSALQIKGMPYKAHELVGEINPLSPSFFYVNFYLSPKDYHHYHAPCDLEILEARCFAGKLLPVNKPSLHKNKNLFVGNERVALVAKDIQGNRLYFVAVGALNVGKMRFNFDKNIQTNAKAHLTQAYSYNPPIKVKKGDNLGNFEMGSTIVLFVQNTAFKDLKEKSVKFGESIGEFHAN.

Active-site charge relay system; for autoendoproteolytic cleavage activity residues include aspartate 78, histidine 132, and serine 236. Catalysis depends on serine 236, which acts as the Schiff-base intermediate with substrate; via pyruvic acid; for decarboxylase activity. Serine 236 is modified (pyruvic acid (Ser); by autocatalysis).

Belongs to the phosphatidylserine decarboxylase family. PSD-B subfamily. Prokaryotic type I sub-subfamily. As to quaternary structure, heterodimer of a large membrane-associated beta subunit and a small pyruvoyl-containing alpha subunit. Requires pyruvate as cofactor. In terms of processing, is synthesized initially as an inactive proenzyme. Formation of the active enzyme involves a self-maturation process in which the active site pyruvoyl group is generated from an internal serine residue via an autocatalytic post-translational modification. Two non-identical subunits are generated from the proenzyme in this reaction, and the pyruvate is formed at the N-terminus of the alpha chain, which is derived from the carboxyl end of the proenzyme. The autoendoproteolytic cleavage occurs by a canonical serine protease mechanism, in which the side chain hydroxyl group of the serine supplies its oxygen atom to form the C-terminus of the beta chain, while the remainder of the serine residue undergoes an oxidative deamination to produce ammonia and the pyruvoyl prosthetic group on the alpha chain. During this reaction, the Ser that is part of the protease active site of the proenzyme becomes the pyruvoyl prosthetic group, which constitutes an essential element of the active site of the mature decarboxylase.

It localises to the cell membrane. The enzyme catalyses a 1,2-diacyl-sn-glycero-3-phospho-L-serine + H(+) = a 1,2-diacyl-sn-glycero-3-phosphoethanolamine + CO2. It functions in the pathway phospholipid metabolism; phosphatidylethanolamine biosynthesis; phosphatidylethanolamine from CDP-diacylglycerol: step 2/2. Functionally, catalyzes the formation of phosphatidylethanolamine (PtdEtn) from phosphatidylserine (PtdSer). This Helicobacter pylori (strain Shi470) protein is Phosphatidylserine decarboxylase proenzyme.